We begin with the raw amino-acid sequence, 170 residues long: MKTIEVDDQIYRYIASRTLHIGESASDILRRLLALPLDTEPTVALGHEANAEQTDEVSTDVLTMLLDNAQLAKEESAIARFMLILSALYRSQPDAFRHAADIKGRKRIYFAEDPQALLDNGKTTKPKPVPETPYWVITNTNTGRKRLIIEQLMQAMGYSADLIAEVCNKV.

The segment at asparagine 139–lysine 145 is interaction with DNA.

This sequence belongs to the SeqA family. In terms of assembly, homodimer. Polymerizes to form helical filaments.

It is found in the cytoplasm. Its function is as follows. Negative regulator of replication initiation, which contributes to regulation of DNA replication and ensures that replication initiation occurs exactly once per chromosome per cell cycle. Binds to pairs of hemimethylated GATC sequences in the oriC region, thus preventing assembly of replication proteins and re-initiation at newly replicated origins. Repression is relieved when the region becomes fully methylated. In Tolumonas auensis (strain DSM 9187 / NBRC 110442 / TA 4), this protein is Negative modulator of initiation of replication.